Reading from the N-terminus, the 309-residue chain is Interferon-inducible double-stranded RNA-dependent protein kinase activator A homolog A (309 aa).

Residues 1–22 (MSQERFPAAPKMSSEKPTSLDA) form a disordered region. 3 DRBM domains span residues 31-98 (TPIQ…ILRG), 123-191 (NPVG…KFKT), and 236-304 (DYVK…YLKI).

Belongs to the PRKRA family. In terms of assembly, homodimer. Interacts with dicer1 and eif2ak2/pkr. Also able to interact with dsRNA.

The protein resides in the cytoplasm. It localises to the perinuclear region. The protein localises to the nucleus. In terms of biological role, activates eif2ak2/pkr in the absence of double-stranded RNA (dsRNA), leading to phosphorylation of eif2s1/efi2-alpha and inhibition of translation and induction of apoptosis. Required for siRNA production by dicer1 and for subsequent siRNA-mediated post-transcriptional gene silencing. Does not seem to be required for processing of pre-miRNA to miRNA by dicer1. In Xenopus laevis (African clawed frog), this protein is Interferon-inducible double-stranded RNA-dependent protein kinase activator A homolog A (prkra-a).